The sequence spans 351 residues: Phospho-N-acetylmuramoyl-pentapeptide-transferase (351 aa).

The next 10 membrane-spanning stretches (helical) occupy residues 17-37 (MAYA…YIIL), 62-82 (GIPT…LVFW), 85-105 (ILNV…FLGF), 130-150 (IIFS…HVSV), 158-178 (SFQI…LISA), 190-210 (GLAI…AYLT), 230-250 (LVIF…FNAY), 254-274 (IMMG…AALI), 279-299 (ILFS…IIQV), and 328-348 (QVVI…LSTI).

Belongs to the glycosyltransferase 4 family. MraY subfamily. Requires Mg(2+) as cofactor.

It is found in the cell inner membrane. The catalysed reaction is UDP-N-acetyl-alpha-D-muramoyl-L-alanyl-gamma-D-glutamyl-meso-2,6-diaminopimeloyl-D-alanyl-D-alanine + di-trans,octa-cis-undecaprenyl phosphate = di-trans,octa-cis-undecaprenyl diphospho-N-acetyl-alpha-D-muramoyl-L-alanyl-D-glutamyl-meso-2,6-diaminopimeloyl-D-alanyl-D-alanine + UMP. It functions in the pathway cell wall biogenesis; peptidoglycan biosynthesis. In terms of biological role, catalyzes the initial step of the lipid cycle reactions in the biosynthesis of the cell wall peptidoglycan: transfers peptidoglycan precursor phospho-MurNAc-pentapeptide from UDP-MurNAc-pentapeptide onto the lipid carrier undecaprenyl phosphate, yielding undecaprenyl-pyrophosphoryl-MurNAc-pentapeptide, known as lipid I. This is Phospho-N-acetylmuramoyl-pentapeptide-transferase from Borreliella burgdorferi (strain ATCC 35210 / DSM 4680 / CIP 102532 / B31) (Borrelia burgdorferi).